The sequence spans 199 residues: Thymidine kinase (199 aa).

ATP-binding positions include Gly23 to Thr30 and Asp95 to Gln98. Residue Glu96 is the Proton acceptor of the active site. Cys152, Cys155, Cys184, and Cys187 together coordinate Zn(2+).

The protein belongs to the thymidine kinase family. As to quaternary structure, homotetramer.

It localises to the cytoplasm. It catalyses the reaction thymidine + ATP = dTMP + ADP + H(+). This is Thymidine kinase from Bacteroides fragilis (strain YCH46).